Reading from the N-terminus, the 1121-residue chain is Phytochrome 2 (1121 aa).

The region spanning 214–393 is the GAF domain; it reads DIGLLCDTVV…VFGMQLNMEV (180 aa). Cysteine 319 serves as a coordination point for phytochromobilin. PAS domains are found at residues 608–679 and 742–813; these read VANE…SQGE and DYKT…TKFM. The Histidine kinase domain occupies 893 to 1113; that stretch reads YIRQEIKNPL…VVYVELPMAQ (221 aa).

It belongs to the phytochrome family. Homodimer. Post-translationally, contains one covalently linked phytochromobilin chromophore.

In terms of biological role, regulatory photoreceptor which exists in two forms that are reversibly interconvertible by light: the Pr form that absorbs maximally in the red region of the spectrum and the Pfr form that absorbs maximally in the far-red region. Photoconversion of Pr to Pfr induces an array of morphogenic responses, whereas reconversion of Pfr to Pr cancels the induction of those responses. Pfr controls the expression of a number of nuclear genes including those encoding the small subunit of ribulose-bisphosphate carboxylase, chlorophyll A/B binding protein, protochlorophyllide reductase, rRNA, etc. It also controls the expression of its own gene(s) in a negative feedback fashion. In Ceratodon purpureus (Fire moss), this protein is Phytochrome 2 (PHY2).